The primary structure comprises 86 residues: Small ribosomal subunit protein bS20 (86 aa).

Residues 1-11 (MANHKSALKRA) show a composition bias toward basic residues. The tract at residues 1 to 27 (MANHKSALKRARQNEERRIRNRARKTR) is disordered.

Belongs to the bacterial ribosomal protein bS20 family.

In terms of biological role, binds directly to 16S ribosomal RNA. The sequence is that of Small ribosomal subunit protein bS20 from Syntrophobacter fumaroxidans (strain DSM 10017 / MPOB).